A 469-amino-acid chain; its full sequence is Probable glycine dehydrogenase (decarboxylating) subunit 1 (469 aa).

The protein belongs to the GcvP family. N-terminal subunit subfamily. As to quaternary structure, the glycine cleavage system is composed of four proteins: P, T, L and H. In this organism, the P 'protein' is a heterodimer of two subunits.

The enzyme catalyses N(6)-[(R)-lipoyl]-L-lysyl-[glycine-cleavage complex H protein] + glycine + H(+) = N(6)-[(R)-S(8)-aminomethyldihydrolipoyl]-L-lysyl-[glycine-cleavage complex H protein] + CO2. In terms of biological role, the glycine cleavage system catalyzes the degradation of glycine. The P protein binds the alpha-amino group of glycine through its pyridoxal phosphate cofactor; CO(2) is released and the remaining methylamine moiety is then transferred to the lipoamide cofactor of the H protein. This Staphylothermus marinus (strain ATCC 43588 / DSM 3639 / JCM 9404 / F1) protein is Probable glycine dehydrogenase (decarboxylating) subunit 1.